We begin with the raw amino-acid sequence, 575 residues long: uncharacterized protein (575 aa).

The protein localises to the cytoplasm. It localises to the cytoskeleton. Its subcellular location is the microtubule organizing center. The protein resides in the spindle pole body. This is an uncharacterized protein from Schizosaccharomyces pombe (strain 972 / ATCC 24843) (Fission yeast).